The following is a 215-amino-acid chain: Urease accessory protein UreG (215 aa).

Residues 1–21 (MNAPAPSSARRTKKLPPLRVG) form a disordered region. 24 to 31 (GPVGSGKT) serves as a coordination point for GTP.

This sequence belongs to the SIMIBI class G3E GTPase family. UreG subfamily. Homodimer. UreD, UreF and UreG form a complex that acts as a GTP-hydrolysis-dependent molecular chaperone, activating the urease apoprotein by helping to assemble the nickel containing metallocenter of UreC. The UreE protein probably delivers the nickel.

The protein resides in the cytoplasm. In terms of biological role, facilitates the functional incorporation of the urease nickel metallocenter. This process requires GTP hydrolysis, probably effectuated by UreG. In Burkholderia lata (strain ATCC 17760 / DSM 23089 / LMG 22485 / NCIMB 9086 / R18194 / 383), this protein is Urease accessory protein UreG.